A 264-amino-acid polypeptide reads, in one-letter code: 3-methyl-2-oxobutanoate hydroxymethyltransferase (264 aa).

Residues D45 and D84 each contribute to the Mg(2+) site. Residues 45 to 46, D84, and K112 each bind 3-methyl-2-oxobutanoate; that span reads DS. E114 contributes to the Mg(2+) binding site. E181 (proton acceptor) is an active-site residue.

Belongs to the PanB family. As to quaternary structure, homodecamer; pentamer of dimers. Mg(2+) serves as cofactor.

It localises to the cytoplasm. The enzyme catalyses 3-methyl-2-oxobutanoate + (6R)-5,10-methylene-5,6,7,8-tetrahydrofolate + H2O = 2-dehydropantoate + (6S)-5,6,7,8-tetrahydrofolate. It participates in cofactor biosynthesis; (R)-pantothenate biosynthesis; (R)-pantoate from 3-methyl-2-oxobutanoate: step 1/2. Catalyzes the reversible reaction in which hydroxymethyl group from 5,10-methylenetetrahydrofolate is transferred onto alpha-ketoisovalerate to form ketopantoate. The sequence is that of 3-methyl-2-oxobutanoate hydroxymethyltransferase from Shigella sonnei (strain Ss046).